We begin with the raw amino-acid sequence, 249 residues long: Mannose-binding protein A (249 aa).

A signal peptide spans 1 to 20 (MLLFSSLPVLLLCVVTASYS). The disordered stretch occupies residues 41–102 (VTNGTPGRDG…KGDPGDTSGV (62 aa)). A compositionally biased stretch (basic and acidic residues) spans 48–60 (RDGRDGPKGEKGE). Pro-54 bears the 4-hydroxyproline mark. 2 positions are modified to 5-hydroxylysine: Lys-55 and Lys-58. O-linked (Gal...) hydroxylysine glycans are attached at residues Lys-55 and Lys-58. 4-hydroxyproline occurs at positions 61, 72, 78, and 89. The 35-residue stretch at 64–98 (GFRGSQGPPGKMGPPGNIGETGPLGPKGQKGDPGD) folds into the Collagen-like domain. 5-hydroxylysine occurs at positions 90 and 93. 2 O-linked (Gal...) hydroxylysine glycosylation sites follow: Lys-90 and Lys-93. In terms of domain architecture, C-type lectin spans 135 to 246 (SRKKLYVTNG…CSSSFLAVCE (112 aa)). Intrachain disulfides connect Cys-156–Cys-245 and Cys-223–Cys-237. Ca(2+) contacts are provided by Asp-189, Glu-193, Glu-213, Asn-215, Asp-216, Glu-221, Asp-222, Asn-233, and Asp-234. Residues 213–221 (EPNDHGSGE) are calcium-dependent carbohydrate binding.

As to quaternary structure, interacts with MASP1 and MASP2. Forms oligomeric complexes of 3, 4, 5 or, predominantly, 6 homotrimers. The homotrimers appear as globular heads that are connected to a central hub by thin stalks. Post-translationally, hydroxylated on lysine and proline residues within the collagen-like domain. In terms of processing, O-glycosylated. O-linked glycans on hydroxylysine residues consist of Glc-Gal disaccharides bound to the oxygen atom of post-translationally added hydroxyl groups. Detected in blood serum (at protein level). Expressed in liver. Weakly expressed in lung, testis and brain. Not detected in bone marrow and heart.

The protein resides in the secreted. Functionally, calcium-dependent lectin. Plays a role in the innate immune response by binding mannose, fucose and N-acetylglucosamine on bacteria, including strains of A.suis, H.parasuis and A.pleuropneumoniae, and activates the lectin complement pathway. According to some authors, it only binds mannose. In Sus scrofa (Pig), this protein is Mannose-binding protein A.